Here is a 276-residue protein sequence, read N- to C-terminus: Halorhodopsin (276 aa).

The propeptide occupies 1–20 (MTAASTTATTVLQATQSDVL). Q21 bears the Pyrrolidone carboxylic acid mark. Helical transmembrane passes span 31–51 (SSIWVNIALAGVVILLFVAMG), 61–81 (LIWVATMLVPLVSISSYAGLA), 109–129 (YLTWTFSTPMILLALGLLADT), 134–154 (LFTAITMDIGMCVTGLAAALI), 162–182 (WVFYGISCAFFVAVLYVLLVQ), 195–215 (IFGTLKILTVVLWLGYPILWA), and 220–240 (GVALLSVGVTSWGYSGLDILA). Residue K241 is modified to N6-(retinylidene)lysine.

The protein belongs to the archaeal/bacterial/fungal opsin family. In terms of processing, the covalent binding of retinal to the apoprotein, bacterioopsin, generates bacteriorhodopsin.

It localises to the membrane. Light-driven chloride pump. This is Halorhodopsin (hop) from Haloarcula marismortui (strain ATCC 43049 / DSM 3752 / JCM 8966 / VKM B-1809) (Halobacterium marismortui).